The sequence spans 298 residues: DDRGK domain-containing protein 1 (298 aa).

Residues 1 to 21 (MDIVLYFVAVPILIVLIVSAV) form a helical membrane-spanning segment. At 22–298 (KVRGKTEEDN…NLIPEIHNTA (277 aa)) the chain is on the cytoplasmic side. The interval 71–149 (NSAYREAADN…EERRKEDKKE (79 aa)) is disordered. Over residues 82–94 (SPVEVEEEYEEAE) the composition is skewed to acidic residues. Positions 110–149 (KLEEKQAKRAQREAELEEREERKRTQELREEERRKEDKKE) are enriched in basic and acidic residues. The UFM1-interacting motif (UFIM) signature appears at 181–195 (SFVVEEQGEADELTE). In terms of domain architecture, PCI spans 215-259 (VLLEDLASHFGLRTQDAISRLQDLLSDGSITGVIDDRGKFIFITP).

Belongs to the DDRGK1 family. Component of the UFM1 ribosome E3 ligase (UREL) complex, composed of ufl1, ddrgk1 and cdk5rap3.

The protein localises to the endoplasmic reticulum membrane. Its function is as follows. Component of the UFM1 ribosome E3 ligase (UREL) complex, a multiprotein complex that catalyzes ufmylation of endoplasmic reticulum-docked proteins. The UREL complex plays a key role in ribosome recycling by mediating mono-ufmylation of the RPL26/uL24 subunit of the 60S ribosome following ribosome dissociation: ufmylation weakens the junction between post-termination 60S subunits and SEC61 translocons, promoting release and recycling of the large ribosomal subunit from the endoplasmic reticulum membrane. Ufmylation of RPL26/uL24 and subsequent 60S ribosome recycling either take place after normal termination of translation or after ribosome stalling during cotranslational translocation at the endoplasmic reticulum. Within the UREL complex, DDRGK1 tethers the complex to the endoplasmic reticulum membrane to restrict its activity to endoplasmic reticulum-docked ribosomes and acts as an ufmylation 'reader': following RPL26/uL24 ufmylation, DDRGK1 specifically binds to ufmylated RPL26/uL24 via its UFIM motif, resulting in stable association between the 60S ribosome and the UREL complex, followed by dissociation of the 60S ribosome subunit from the endoplasmic reticulum membrane. The UREL complex is also involved in reticulophagy in response to endoplasmic reticulum stress by promoting ufmylation of proteins such as CYB5R3 and RPN1, thereby promoting lysosomal degradation of ufmylated proteins. Required for stabilization and ufmylation of ATG9A. This chain is DDRGK domain-containing protein 1, found in Osmerus mordax (Rainbow smelt).